Here is a 271-residue protein sequence, read N- to C-terminus: Ribosomal RNA small subunit methyltransferase A (271 aa).

Positions 18, 20, 45, 66, 91, and 112 each coordinate S-adenosyl-L-methionine.

It belongs to the class I-like SAM-binding methyltransferase superfamily. rRNA adenine N(6)-methyltransferase family. RsmA subfamily.

Its subcellular location is the cytoplasm. The enzyme catalyses adenosine(1518)/adenosine(1519) in 16S rRNA + 4 S-adenosyl-L-methionine = N(6)-dimethyladenosine(1518)/N(6)-dimethyladenosine(1519) in 16S rRNA + 4 S-adenosyl-L-homocysteine + 4 H(+). Functionally, specifically dimethylates two adjacent adenosines (A1518 and A1519) in the loop of a conserved hairpin near the 3'-end of 16S rRNA in the 30S particle. May play a critical role in biogenesis of 30S subunits. The polypeptide is Ribosomal RNA small subunit methyltransferase A (Vibrio cholerae serotype O1 (strain ATCC 39315 / El Tor Inaba N16961)).